The primary structure comprises 149 residues: Large ribosomal subunit protein bL9 (149 aa).

This sequence belongs to the bacterial ribosomal protein bL9 family.

Functionally, binds to the 23S rRNA. The chain is Large ribosomal subunit protein bL9 from Bacillus licheniformis (strain ATCC 14580 / DSM 13 / JCM 2505 / CCUG 7422 / NBRC 12200 / NCIMB 9375 / NCTC 10341 / NRRL NRS-1264 / Gibson 46).